Consider the following 535-residue polypeptide: Phosphoenolpyruvate carboxykinase (ATP) 1 (535 aa).

Substrate contacts are provided by arginine 58, tyrosine 193, and lysine 199. Residues lysine 199, histidine 218, and 234–242 (GLSGTGKTT) each bind ATP. Lysine 199 and histidine 218 together coordinate Mn(2+). A Mn(2+)-binding site is contributed by aspartate 255. ATP-binding positions include glutamate 283, arginine 321, 440 to 441 (RI), and threonine 446. Arginine 321 contributes to the substrate binding site.

Belongs to the phosphoenolpyruvate carboxykinase (ATP) family. Requires Mn(2+) as cofactor.

The protein localises to the cytoplasm. It carries out the reaction oxaloacetate + ATP = phosphoenolpyruvate + ADP + CO2. It participates in carbohydrate biosynthesis; gluconeogenesis. Involved in the gluconeogenesis. Catalyzes the conversion of oxaloacetate (OAA) to phosphoenolpyruvate (PEP) through direct phosphoryl transfer between the nucleoside triphosphate and OAA. This Salinibacter ruber (strain DSM 13855 / M31) protein is Phosphoenolpyruvate carboxykinase (ATP) 1.